Consider the following 134-residue polypeptide: Phosphoribosyl-AMP cyclohydrolase (134 aa).

A Mg(2+)-binding site is contributed by aspartate 80. Cysteine 81 is a Zn(2+) binding site. Mg(2+) contacts are provided by aspartate 82 and aspartate 84. 2 residues coordinate Zn(2+): cysteine 98 and cysteine 105.

It belongs to the PRA-CH family. In terms of assembly, homodimer. Requires Mg(2+) as cofactor. Zn(2+) is required as a cofactor.

The protein localises to the cytoplasm. The catalysed reaction is 1-(5-phospho-beta-D-ribosyl)-5'-AMP + H2O = 1-(5-phospho-beta-D-ribosyl)-5-[(5-phospho-beta-D-ribosylamino)methylideneamino]imidazole-4-carboxamide. It functions in the pathway amino-acid biosynthesis; L-histidine biosynthesis; L-histidine from 5-phospho-alpha-D-ribose 1-diphosphate: step 3/9. Its function is as follows. Catalyzes the hydrolysis of the adenine ring of phosphoribosyl-AMP. The chain is Phosphoribosyl-AMP cyclohydrolase from Bordetella bronchiseptica (strain ATCC BAA-588 / NCTC 13252 / RB50) (Alcaligenes bronchisepticus).